Reading from the N-terminus, the 263-residue chain is Elongation factor Ts (263 aa).

The tract at residues 82-85 is involved in Mg(2+) ion dislocation from EF-Tu; that stretch reads TDFV. Over residues 221-251 the composition is skewed to low complexity; that stretch reads APPAVVEAPVAETPEPAVAETPEAKPAATES. Positions 221-263 are disordered; it reads APPAVVEAPVAETPEPAVAETPEAKPAATESKPAKSKSAKKKK. A compositionally biased stretch (basic residues) spans 254 to 263; sequence AKSKSAKKKK.

Belongs to the EF-Ts family.

It is found in the cytoplasm. Functionally, associates with the EF-Tu.GDP complex and induces the exchange of GDP to GTP. It remains bound to the aminoacyl-tRNA.EF-Tu.GTP complex up to the GTP hydrolysis stage on the ribosome. In Cyanothece sp. (strain PCC 7425 / ATCC 29141), this protein is Elongation factor Ts.